Consider the following 312-residue polypeptide: Eukaryotic translation initiation factor 2 subunit 2 (312 aa).

Disordered regions lie at residues alanine 26–methionine 104 and alanine 125–tryptophan 146. Serine 44 is modified (phosphoserine). 2 stretches are compositionally biased toward acidic residues: residues alanine 90–leucine 102 and alanine 125–asparagine 142. At serine 133 the chain carries Phosphoserine. Threonine 145 carries the post-translational modification Phosphothreonine. The C4-type zinc-finger motif lies at cysteine 260–cysteine 284.

It belongs to the eIF-2-beta/eIF-5 family. In terms of assembly, eukaryotic translation initiation factor 2 eIF2 is a heterotrimeric complex composed of an alpha, a beta and a gamma subunit.

It localises to the cytoplasm. The protein resides in the cytosol. Its function is as follows. Component of the eIF2 complex that functions in the early steps of protein synthesis by forming a ternary complex with GTP and initiator tRNA. This complex binds to a 40S ribosomal subunit, followed by mRNA binding to form a 43S pre-initiation complex (43S PIC). Junction of the 60S ribosomal subunit to form the 80S initiation complex is preceded by hydrolysis of the GTP bound to eIF2 and release of an eIF2-GDP binary complex. In order for eIF2 to recycle and catalyze another round of initiation, the GDP bound to eIF2 must exchange with GTP by way of a reaction catalyzed by eIF2B. This Drosophila melanogaster (Fruit fly) protein is Eukaryotic translation initiation factor 2 subunit 2.